A 345-amino-acid chain; its full sequence is tRNA-dihydrouridine(20/20a) synthase (345 aa).

Residues 32–34 and Gln84 each bind FMN; that span reads PML. Residue Cys114 is the Proton donor of the active site. FMN-binding positions include Lys153, His186, 226 to 228, and 248 to 249; these read NGG and GR.

The protein belongs to the Dus family. DusA subfamily. It depends on FMN as a cofactor.

It catalyses the reaction 5,6-dihydrouridine(20) in tRNA + NADP(+) = uridine(20) in tRNA + NADPH + H(+). The enzyme catalyses 5,6-dihydrouridine(20) in tRNA + NAD(+) = uridine(20) in tRNA + NADH + H(+). It carries out the reaction 5,6-dihydrouridine(20a) in tRNA + NADP(+) = uridine(20a) in tRNA + NADPH + H(+). The catalysed reaction is 5,6-dihydrouridine(20a) in tRNA + NAD(+) = uridine(20a) in tRNA + NADH + H(+). Catalyzes the synthesis of 5,6-dihydrouridine (D), a modified base found in the D-loop of most tRNAs, via the reduction of the C5-C6 double bond in target uridines. Specifically modifies U20 and U20a in tRNAs. This Escherichia coli O157:H7 protein is tRNA-dihydrouridine(20/20a) synthase.